Reading from the N-terminus, the 695-residue chain is Elongation factor G (695 aa).

The region spanning 12–286 is the tr-type G domain; sequence DKIRNIGIMA…AVIDYLPSPL (275 aa). GTP contacts are provided by residues 21-28, 85-89, and 139-142; these read AHIDAGKT, DTPGH, and NKMD.

Belongs to the TRAFAC class translation factor GTPase superfamily. Classic translation factor GTPase family. EF-G/EF-2 subfamily.

It localises to the cytoplasm. Its function is as follows. Catalyzes the GTP-dependent ribosomal translocation step during translation elongation. During this step, the ribosome changes from the pre-translocational (PRE) to the post-translocational (POST) state as the newly formed A-site-bound peptidyl-tRNA and P-site-bound deacylated tRNA move to the P and E sites, respectively. Catalyzes the coordinated movement of the two tRNA molecules, the mRNA and conformational changes in the ribosome. This is Elongation factor G from Thermotoga neapolitana (strain ATCC 49049 / DSM 4359 / NBRC 107923 / NS-E).